A 115-amino-acid chain; its full sequence is Transcription and mRNA export factor ENY2 (115 aa).

The protein belongs to the ENY2 family. In terms of assembly, component of a deubiquitination module (DUB module) formed by ENY2, SGF11, and UBP22 in Arabidopsis. Interacts directly with SGF11, but not with UBP22. Interacts with MOS4. In terms of tissue distribution, expressed in roots, cotyledons, leaves and upper part of sepals.

The protein resides in the nucleus. Its subcellular location is the nucleoplasm. In terms of biological role, component of a deubiquitination module (DUB module) that specifically deubiquinates monoubiquinated histone H2B (H2Bub). Does not seem to be a component of the TREX-2 complex. Seems to act independently of the SAGA multiprotein complex. The DUB module is responsible for the major H2Bub deubiquitinase activity in Arabidopsis. This is Transcription and mRNA export factor ENY2 from Arabidopsis thaliana (Mouse-ear cress).